Here is a 201-residue protein sequence, read N- to C-terminus: Probable cytokinin riboside 5'-monophosphate phosphoribohydrolase LOG6 (201 aa).

Substrate-binding positions include Glu89, 107–108 (RK), 124–130 (GYGTLEE), and Thr136.

This sequence belongs to the LOG family.

The catalysed reaction is N(6)-(dimethylallyl)adenosine 5'-phosphate + H2O = N(6)-dimethylallyladenine + D-ribose 5-phosphate. The enzyme catalyses 9-ribosyl-trans-zeatin 5'-phosphate + H2O = trans-zeatin + D-ribose 5-phosphate. Cytokinin-activating enzyme working in the direct activation pathway. Phosphoribohydrolase that converts inactive cytokinin nucleotides to the biologically active free-base forms. In Arabidopsis thaliana (Mouse-ear cress), this protein is Probable cytokinin riboside 5'-monophosphate phosphoribohydrolase LOG6 (LOG6).